Reading from the N-terminus, the 203-residue chain is Signal peptidase I (203 aa).

The disordered stretch occupies residues 1–26 (MSSESDSPTPQTPPAQPAASQPKADS). Over 1–33 (MSSESDSPTPQTPPAQPAASQPKADSPLMEGIK) the chain is Cytoplasmic. Low complexity predominate over residues 17–26 (PAASQPKADS). The helical transmembrane segment at 34–50 (TIGLSVVLALGIRTFVA) threads the bilayer. The Extracellular portion of the chain corresponds to 51-203 (EARYIPSESM…LGELGPPPSY (153 aa)). Active-site residues include Ser-59 and Lys-109.

Belongs to the peptidase S26 family.

It localises to the cell membrane. The enzyme catalyses Cleavage of hydrophobic, N-terminal signal or leader sequences from secreted and periplasmic proteins.. The sequence is that of Signal peptidase I (lepB) from Leptolyngbya laminosa (Phormidium laminosum).